The following is a 264-amino-acid chain: Acyl-[acyl-carrier-protein]--UDP-N-acetylglucosamine O-acyltransferase (264 aa).

The protein belongs to the transferase hexapeptide repeat family. LpxA subfamily. Homotrimer.

Its subcellular location is the cytoplasm. It catalyses the reaction a (3R)-hydroxyacyl-[ACP] + UDP-N-acetyl-alpha-D-glucosamine = a UDP-3-O-[(3R)-3-hydroxyacyl]-N-acetyl-alpha-D-glucosamine + holo-[ACP]. The protein operates within glycolipid biosynthesis; lipid IV(A) biosynthesis; lipid IV(A) from (3R)-3-hydroxytetradecanoyl-[acyl-carrier-protein] and UDP-N-acetyl-alpha-D-glucosamine: step 1/6. Functionally, involved in the biosynthesis of lipid A, a phosphorylated glycolipid that anchors the lipopolysaccharide to the outer membrane of the cell. In Haemophilus ducreyi (strain 35000HP / ATCC 700724), this protein is Acyl-[acyl-carrier-protein]--UDP-N-acetylglucosamine O-acyltransferase.